The chain runs to 689 residues: PR domain zinc finger protein 8 (689 aa).

One can recognise an SET domain in the interval 16-131 (KAVQQCLTDI…KDEELLVWYG (116 aa)). Position 130 (Tyr130) interacts with S-adenosyl-L-methionine. The C2H2-type 1 zinc-finger motif lies at 155-183 (YTCLECSQRFQFEFPYVAHLRFRCPKRLH). Disordered regions lie at residues 185 to 333 (ADIS…VGGR) and 397 to 506 (SLQE…QPAR). Residues 193–210 (QGGGVGTKDHGGGGGGGK) are compositionally biased toward gly residues. 2 stretches are compositionally biased toward low complexity: residues 241-258 (PESS…AKPS) and 273-286 (GGSS…LSSG). The span at 322-333 (EGGGGAGLVGGR) shows a compositional bias: gly residues. Residues 423–433 (STPAAASPVGA) are compositionally biased toward low complexity. The segment covering 472 to 491 (TSGGGGTGAGAAGGAGGGQG) has biased composition (gly residues). 2 consecutive C2H2-type zinc fingers follow at residues 625-648 (NWCA…RSHH) and 666-688 (LKCP…MTSH).

The protein belongs to the class V-like SAM-binding methyltransferase superfamily. Interacts with EPM2A and NHLRC1. This interaction sequesters EPM2A and NHLRC1 to the nucleus. Interacts with BHLHE22. Expressed in brain, heart, skeletal muscle, testes, prostate.

The protein localises to the nucleus. Functionally, probable histone methyltransferase, preferentially acting on 'Lys-9' of histone H3. Involved in the control of steroidogenesis through transcriptional repression of steroidogenesis marker genes such as CYP17A1 and LHCGR. Forms with BHLHE22 a transcriptional repressor complex controlling genes involved in neural development and neuronal differentiation. In the retina, it is required for rod bipolar and type 2 OFF-cone bipolar cell survival. This Homo sapiens (Human) protein is PR domain zinc finger protein 8 (PRDM8).